A 1485-amino-acid polypeptide reads, in one-letter code: Cystic fibrosis transmembrane conductance regulator (1485 aa).

Over 1 to 78 the chain is Cytoplasmic; that stretch reads MQKTPLEKAS…KLINALKRCF (78 aa). The helical transmembrane segment at 79–99 threads the bilayer; that stretch reads FWKFLFYGILLYLGEVTKAVQ. Residues 82–366 form the ABC transmembrane type-1 1 domain; sequence FLFYGILLYL…WAVQTWYDSL (285 aa). At 100–123 the chain is on the extracellular side; it reads PLLLGRIIASYDRDNEHERSIAYY. Residues 124–147 traverse the membrane as a helical segment; sequence LAIGLCLLFVVRMLLLHPAIFGLH. Residues 148–196 are Cytoplasmic-facing; the sequence is HIGMQMRIAMFSLIYKKTLKLSSKVLDKISTGQLVSLLSNNLNKFDEGL. Residues 197–217 traverse the membrane as a helical segment; it reads ALAHFVWIAPLQVLLLMGLLW. Topologically, residues 218 to 223 are extracellular; the sequence is DLLQAS. Residues 224–244 traverse the membrane as a helical segment; the sequence is AFCGLGFLIILSLFQARLGRM. Residues 245-299 are Cytoplasmic-facing; the sequence is MMKYKDKRAGKINERLVITSQIIENIQSVKAYCWENAMEKIIETIRETELKLTRK. Residues 300 to 320 traverse the membrane as a helical segment; the sequence is AAYVRYFNSSAFFFSGFFVVF. The Extracellular portion of the chain corresponds to 321–340; that stretch reads LSIVPHLLLDGISLRKIFTT. The chain crosses the membrane as a helical span at residues 341-359; the sequence is ISFSIVLRMAVTRQFPWAV. Residues 360–860 are Cytoplasmic-facing; it reads QTWYDSLGVI…YLRFLTAHKN (501 aa). Residues Trp-402, Ser-435, 459 to 466, and Gln-494 contribute to the ATP site; that span reads GSTGAGKT. The 226-residue stretch at 422-647 folds into the ABC transporter 1 domain; it reads ISNEDPSAFF…RPEFSSHLIG (226 aa). Residues 652-833 form a disordered R region region; sequence NAERRNSIIT…EEINEEDLKE (182 aa). A compositionally biased stretch (polar residues) spans 750–760; it reads PRSNFLNTGPT. The chain crosses the membrane as a helical span at residues 861–881; it reads FIFILVFCLVIFFVEVAASSA. One can recognise an ABC transmembrane type-1 2 domain in the interval 880-1163; it reads SAWLWIIKRN…ASIDVDSLMR (284 aa). The Extracellular segment spans residues 882–923; that stretch reads WLWIIKRNAPAINMTSNENVSEVSDTLSVIVTHTSFYYVFYI. Residues Asn-894 and Asn-900 are each glycosylated (N-linked (GlcNAc...) asparagine). A discontinuously helical membrane pass occupies residues 924-944; sequence YVGVADSLLALGIFRGLPLVH. Over 945–995 the chain is Cytoplasmic; sequence SLISVSKVLHKKMLHAILHAPMSTFNTMRAGRILNRFSKDTAILDDILPLS. The helical transmembrane segment at 996 to 1016 threads the bilayer; that stretch reads IFDLTQLVLIVIGAITVVSLL. The Extracellular segment spans residues 1017–1018; sequence EP. Residues 1019 to 1039 traverse the membrane as a helical segment; the sequence is YIFLATVPVIVAFILLRSYFL. The Cytoplasmic segment spans residues 1040-1100; that stretch reads HTSQQLKQLE…TANWFLYLST (61 aa). The helical transmembrane segment at 1101–1121 threads the bilayer; sequence LRWFQMTIEMIFVIFFIAVSF. Residues 1122–1135 are Extracellular-facing; that stretch reads ISIATSGAGEEKVG. Residues 1136 to 1156 form a helical membrane-spanning segment; the sequence is IVLTLAMNIMNTLQWAVNASI. Residues 1157–1485 lie on the Cytoplasmic side of the membrane; the sequence is DVDSLMRSVS…TEEEVQDTRL (329 aa). Positions 1213-1446 constitute an ABC transporter 2 domain; the sequence is MTVKNLSANY…KSFFKQAISH (234 aa). Residues Tyr-1222 and 1247 to 1254 contribute to the ATP site; that span reads GRTGSGKS. The segment at 1458–1485 is disordered; it reads RNSSKRKSRPQISALQEETEEEVQDTRL. The span at 1474 to 1485 shows a compositional bias: acidic residues; it reads EETEEEVQDTRL. Residues 1483–1485 carry the PDZ-binding motif; that stretch reads TRL.

The protein belongs to the ABC transporter superfamily. ABCC family. CFTR transporter (TC 3.A.1.202) subfamily. Monomer; does not require oligomerization for channel activity. May form oligomers in the membrane. Phosphorylated; cAMP treatment promotes phosphorylation and activates the channel. Dephosphorylation decreases the ATPase activity (in vitro). Phosphorylation at PKA sites activates the channel. Phosphorylation at PKC sites enhances the response to phosphorylation by PKA.

The protein localises to the apical cell membrane. The protein resides in the early endosome membrane. It is found in the cell membrane. Its subcellular location is the recycling endosome membrane. It localises to the endoplasmic reticulum membrane. It catalyses the reaction ATP + H2O + closed Cl(-) channel = ADP + phosphate + open Cl(-) channel.. The enzyme catalyses chloride(in) = chloride(out). It carries out the reaction hydrogencarbonate(in) = hydrogencarbonate(out). The catalysed reaction is ATP + H2O = ADP + phosphate + H(+). Epithelial ion channel that plays an important role in the regulation of epithelial ion and water transport and fluid homeostasis. Mediates the transport of chloride ions across the cell membrane. Possesses an intrinsic ATPase activity and utilizes ATP to gate its channel; the passive flow of anions through the channel is gated by cycles of ATP binding and hydrolysis by the ATP-binding domains. The ion channel is also permeable to HCO(3)(-); selectivity depends on the extracellular chloride concentration. Exerts its function also by modulating the activity of other ion channels and transporters. Contributes to the regulation of the pH and the ion content of the epithelial fluid layer. In Xenopus laevis (African clawed frog), this protein is Cystic fibrosis transmembrane conductance regulator.